The chain runs to 218 residues: Elongation factor Ts (218 aa).

The tract at residues 82-85 is involved in Mg(2+) ion dislocation from EF-Tu; it reads TDFV.

It belongs to the EF-Ts family.

Its subcellular location is the cytoplasm. Functionally, associates with the EF-Tu.GDP complex and induces the exchange of GDP to GTP. It remains bound to the aminoacyl-tRNA.EF-Tu.GTP complex up to the GTP hydrolysis stage on the ribosome. This Picosynechococcus sp. (strain ATCC 27264 / PCC 7002 / PR-6) (Agmenellum quadruplicatum) protein is Elongation factor Ts.